We begin with the raw amino-acid sequence, 950 residues long: Leucine--tRNA ligase (950 aa).

The 'HIGH' region signature appears at 41-52 (PYPSGDGLHVGH). Residues 718–722 (KMSKS) carry the 'KMSKS' region motif. Residue lysine 721 participates in ATP binding.

Belongs to the class-I aminoacyl-tRNA synthetase family.

The protein localises to the cytoplasm. It carries out the reaction tRNA(Leu) + L-leucine + ATP = L-leucyl-tRNA(Leu) + AMP + diphosphate. This is Leucine--tRNA ligase from Rhodopirellula baltica (strain DSM 10527 / NCIMB 13988 / SH1).